We begin with the raw amino-acid sequence, 254 residues long: Diphthine synthase (254 aa).

Residues leucine 11, aspartate 87, isoleucine 90, 115 to 116 (SV), leucine 167, leucine 208, and histidine 233 each bind S-adenosyl-L-methionine.

It belongs to the diphthine synthase family. In terms of assembly, homodimer.

The catalysed reaction is 2-[(3S)-amino-3-carboxypropyl]-L-histidyl-[translation elongation factor 2] + 3 S-adenosyl-L-methionine = diphthine-[translation elongation factor 2] + 3 S-adenosyl-L-homocysteine + 3 H(+). It functions in the pathway protein modification; peptidyl-diphthamide biosynthesis. S-adenosyl-L-methionine-dependent methyltransferase that catalyzes the trimethylation of the amino group of the modified target histidine residue in translation elongation factor 2 (EF-2), to form an intermediate called diphthine. The three successive methylation reactions represent the second step of diphthamide biosynthesis. In Metallosphaera sedula (strain ATCC 51363 / DSM 5348 / JCM 9185 / NBRC 15509 / TH2), this protein is Diphthine synthase.